Here is a 290-residue protein sequence, read N- to C-terminus: Glutaredoxin domain-containing cysteine-rich protein 1 (290 aa).

The 108-residue stretch at 127 to 234 folds into the Glutaredoxin domain; the sequence is LQQPSADLEF…DLLTKIERVQ (108 aa).

Belongs to the GRXCR1 family. In the inner ear, expressed predominantly in sensory hair cells and their stereocilia bundles with higher levels in outer hair cells (OHC) at P1 and in inner hair cells (IHC) at P5. At P1, expression is prominent in each row of stereocilia within bundles including immature shorter stereocilia. Expression is also observed in apical microvilli of sensory cells at P1 and in kinocilia at P1 and P5. In the adult, expression is localized throughout the length of the stereocilia of both OHC and IHC (at protein level).

It localises to the cell projection. The protein localises to the stereocilium. The protein resides in the microvillus. Its subcellular location is the kinocilium. May play a role in actin filament architecture in developing stereocilia of sensory cells. The sequence is that of Glutaredoxin domain-containing cysteine-rich protein 1 (Grxcr1) from Mus musculus (Mouse).